We begin with the raw amino-acid sequence, 458 residues long: MKEDFKKFKEFIYKKRVGVVGIGVSNIPLINFLIKLGAEVTAFDKKTEEELGEVSSDFKNKGVNLELGDNYLDKLTGFDVVFKTPSMRIDSECLVKVKKEGAYVTSEMEEFVRYCKAKIYGITGSDGKTTTTTIISKILQEEGYKTWVGGNIGTPLFAQIEEIKAEDRVVLELSSFQLMTMNLPMDIAVCTNLAPNHLDMHKDMQEYIDAKKNIFLYQGSTNTLVVNRENEITYGFEAEAKGEVREFSSKREVKEGAYYKDGILYLSGKEVCKKDNIVIKGMHNVENYLAAFIATKDDVSIENMKKVAESFNGVEHRCELVREINGVKYYNDSIASSPNRTLAGLKAFDKKVILIAGGYDKHLLFEPLANEGYPYIKELILLGQTKEKIKDVFKDLEASKGIKINISEVSTLEEAVKKAQDLAKQGDIITLSPACASFDMFPNFMIRGNKFKEIVNEL.

An ATP-binding site is contributed by Gly-124–Thr-130.

Belongs to the MurCDEF family.

The protein resides in the cytoplasm. It catalyses the reaction UDP-N-acetyl-alpha-D-muramoyl-L-alanine + D-glutamate + ATP = UDP-N-acetyl-alpha-D-muramoyl-L-alanyl-D-glutamate + ADP + phosphate + H(+). It functions in the pathway cell wall biogenesis; peptidoglycan biosynthesis. In terms of biological role, cell wall formation. Catalyzes the addition of glutamate to the nucleotide precursor UDP-N-acetylmuramoyl-L-alanine (UMA). The protein is UDP-N-acetylmuramoylalanine--D-glutamate ligase of Clostridium botulinum (strain Alaska E43 / Type E3).